A 482-amino-acid polypeptide reads, in one-letter code: MNFNSLRKEITSNNASVKELVNDFFVKIDHKDSKINSYICTTKDNAIAQAEDIDKLIQNNEKLPPLAGMPIAIKDNICTKGVATTCASNMLKNFVAPYESTASSKLWSSGGICLGKTNLDEFAMGSSTETSVFGVTSNPWDINRVPGGSSGGSAASVAAGFCAAAIGSDTGGSIRQPASFCGVVGLKPTYGRVSRWGLVAFASSLDQIGPITNTVSDAAEILHSISGKDPFDSTCLDKPVPNYLTDLNKSIKGLKIGIIKECFEHPGLNPEVKESVLSGVDRFQALGAEIIEVECPRFNDGIATYYVIAPSEASANLARYDGVKYGYRSNEGSNLIDMTSKSRAEGFGDEVQRRILIGTYALSAGYSDAYYKKAQKVRTLIRKDFDNAFKKVDVLLTPTCPTTAFLKGDFVNDPLSMYLSDLLTVPANLAGLPAISIPCGFDTKGLPIGLQLIGNVLEEDRILNAANIFEIDAHVIKKRPLF.

Residues Lys-74 and Ser-149 each act as charge relay system in the active site. Catalysis depends on Ser-173, which acts as the Acyl-ester intermediate.

The protein belongs to the amidase family. GatA subfamily. Heterotrimer of A, B and C subunits.

The enzyme catalyses L-glutamyl-tRNA(Gln) + L-glutamine + ATP + H2O = L-glutaminyl-tRNA(Gln) + L-glutamate + ADP + phosphate + H(+). In terms of biological role, allows the formation of correctly charged Gln-tRNA(Gln) through the transamidation of misacylated Glu-tRNA(Gln) in organisms which lack glutaminyl-tRNA synthetase. The reaction takes place in the presence of glutamine and ATP through an activated gamma-phospho-Glu-tRNA(Gln). This Prochlorococcus marinus (strain AS9601) protein is Glutamyl-tRNA(Gln) amidotransferase subunit A.